A 352-amino-acid chain; its full sequence is uncharacterized protein (352 aa).

N-linked (GlcNAc...) asparagine glycosylation is found at Asn14, Asn52, and Asn70. The segment at 41 to 73 is disordered; the sequence is LSDYKKNKDTLNNSNNNINQPFENSNNFNNNSK. Over residues 50-72 the composition is skewed to low complexity; it reads TLNNSNNNINQPFENSNNFNNNS. Residues 131-151 traverse the membrane as a helical segment; that stretch reads IIFKSSGLLITLLVLYLGTFF. N-linked (GlcNAc...) asparagine glycans are attached at residues Asn165, Asn186, Asn192, Asn193, Asn203, and Asn289. Residues 193–213 show a composition bias toward low complexity; sequence NSSNSNNNNINNSNNNNNNNN. Residues 193-219 are disordered; that stretch reads NSSNSNNNNINNSNNNNNNNNRILSPN.

It localises to the membrane. This is an uncharacterized protein from Dictyostelium discoideum (Social amoeba).